Reading from the N-terminus, the 413-residue chain is Probable inactive allantoicase (413 aa).

Belongs to the allantoicase family.

The function of this enzyme is unclear as allantoicase activity is not known to exist in mammals. The protein is Probable inactive allantoicase of Rattus norvegicus (Rat).